Reading from the N-terminus, the 180-residue chain is UPF0227 protein YcfP (180 aa).

Belongs to the UPF0227 family.

This is UPF0227 protein YcfP from Salmonella paratyphi A (strain ATCC 9150 / SARB42).